The primary structure comprises 37 residues: MRVSASVKKICRNCKIIRRKGVVRVICTDMRHKQRQG.

Belongs to the bacterial ribosomal protein bL36 family.

The sequence is that of Large ribosomal subunit protein bL36 from Paracidovorax citrulli (strain AAC00-1) (Acidovorax citrulli).